The chain runs to 144 residues: HTH-type transcriptional regulator BilQ (144 aa).

Residues 1 to 134 enclose the HTH marR-type domain; sequence MEQTFAYYTT…LFTLLQKLGK (134 aa). Residues 48-71 constitute a DNA-binding region (H-T-H motif); that stretch reads QRELAAAVRADEGYAARSVEKLLQ.

Transcription regulator that regulates expression of the bilirubin reductase operon (bilQ, bilR and bilS). The protein is HTH-type transcriptional regulator BilQ of Clostridium symbiosum (strain WAL-14163).